A 396-amino-acid chain; its full sequence is Phosphoglycerate kinase (396 aa).

Substrate contacts are provided by residues 21 to 23 (DFN), R36, 59 to 62 (HLGK), R119, and R156. ATP is bound by residues K206, G294, E325, and 352–355 (GGDS).

This sequence belongs to the phosphoglycerate kinase family. In terms of assembly, monomer.

The protein localises to the cytoplasm. It catalyses the reaction (2R)-3-phosphoglycerate + ATP = (2R)-3-phospho-glyceroyl phosphate + ADP. Its pathway is carbohydrate degradation; glycolysis; pyruvate from D-glyceraldehyde 3-phosphate: step 2/5. The polypeptide is Phosphoglycerate kinase (Staphylococcus aureus (strain USA300)).